Here is a 260-residue protein sequence, read N- to C-terminus: Flagellar basal-body rod protein FlgG (260 aa).

It belongs to the flagella basal body rod proteins family. The basal body constitutes a major portion of the flagellar organelle and consists of four rings (L,P,S, and M) mounted on a central rod. The rod consists of about 26 subunits of FlgG in the distal portion, and FlgB, FlgC and FlgF are thought to build up the proximal portion of the rod with about 6 subunits each.

It is found in the bacterial flagellum basal body. The chain is Flagellar basal-body rod protein FlgG (flgG) from Escherichia coli O157:H7.